Here is a 93-residue protein sequence, read N- to C-terminus: MSDVVNIVVWSKKGCSYCEEVKNYLNEKGFPFQNIDVSEKEKLRDILQVKYGVRHVPVVEIGRGNQYQGITEIGIEHLDLALANHAQIKEAKR.

Positions Met1–Arg93 constitute a Glutaredoxin domain. A disulfide bridge connects residues Cys15 and Cys18.

Belongs to the glutaredoxin family.

It carries out the reaction N-acetyl-S-hydroxy-L-cysteine + AH2 = N-acetyl-L-cysteine + A + H2O. It functions in the pathway amino-acid metabolism. Functionally, involved in a cysteine salvage pathway from S-alkylcysteine. Catalyzes the reduction of N-acetyl-S-hydroxy-L-cysteine (N-acetyl-L-cysteine sulfenic acid) to N-acetyl-L-cysteine. This pathway is likely important in the catabolism of alkylated cysteine generated by proteolysis of alkylated glutathione formed in the detoxification of a wide range of electrophiles. The polypeptide is N-acetyl-S-hydroxy-L-cysteine reductase (Bacillus subtilis (strain 168)).